Consider the following 307-residue polypeptide: Elongation factor Ts (307 aa).

Positions 80–83 are involved in Mg(2+) ion dislocation from EF-Tu; that stretch reads TDFV.

Belongs to the EF-Ts family.

Its subcellular location is the cytoplasm. Its function is as follows. Associates with the EF-Tu.GDP complex and induces the exchange of GDP to GTP. It remains bound to the aminoacyl-tRNA.EF-Tu.GTP complex up to the GTP hydrolysis stage on the ribosome. The chain is Elongation factor Ts from Variovorax paradoxus (strain S110).